The following is a 453-amino-acid chain: CAAX prenyl protease 1 (453 aa).

Over 1 to 12 (MFDLKTILDHPN) the chain is Lumenal. Residues 13–33 (IPWKLIISGFSIAQFSFESYL) form a helical membrane-spanning segment. Residues 34 to 89 (TYRQYQKLSETKLPPVLEDEIDDETFHKSRNYSRAKAKFSIFGDVYNLAQKLVFIK) lie on the Cytoplasmic side of the membrane. A helical transmembrane segment spans residues 90–110 (YDLFPKIWHMAVSLLNAVLPV). Residues 111–121 (RFHMVSTVAQS) lie on the Lumenal side of the membrane. Residues 122 to 142 (LCFLGLLSSLSTLVDLPLSYY) form a helical membrane-spanning segment. The Cytoplasmic portion of the chain corresponds to 143 to 167 (SHFVLEEKFGFNKLTVQLWITDMIK). Residues 168–188 (SLTLAYAIGGPILYLFLKIFD) form a helical membrane-spanning segment. Over 189-197 (KFPTDFLWY) the chain is Lumenal. Residues 198–218 (IMVFLFVVQILAMTIIPVFIM) form a helical membrane-spanning segment. Over 219-306 (PMFNKFTPLE…HEIGHWQKNH (88 aa)) the chain is Cytoplasmic. His297 contributes to the Zn(2+) binding site. Glu298 is an active-site residue. His301 is a Zn(2+) binding site. A helical membrane pass occupies residues 307–327 (IVNMVIFSQLHTFLIFSLFTS). Residues 328–357 (IYRNTSFYNTFGFFLEKSTGSFVDPVITKE) are Lumenal-facing. Residues 358–378 (FPIIIGFMLFNDLLTPLECAM) form a helical membrane-spanning segment. The Cytoplasmic segment spans residues 379–453 (QFVMSLISRT…LDYVSEKKKN (75 aa)). Glu390 is a binding site for Zn(2+). Residue Asp394 is the Proton donor of the active site.

It belongs to the peptidase M48A family. Zn(2+) serves as cofactor.

The protein resides in the endoplasmic reticulum membrane. It carries out the reaction Hydrolyzes the peptide bond -P2-(S-farnesyl or geranylgeranyl)C-P1'-P2'-P3'-COOH where P1' and P2' are amino acids with aliphatic side chains and P3' is any C-terminal residue.. Its function is as follows. Proteolytically removes the C-terminal three residues of farnesylated A-factor mating pheromone. Also acts to cleave the N-terminal extension of the pheromone. Does not act on Ras. This chain is CAAX prenyl protease 1 (STE24), found in Saccharomyces cerevisiae (strain ATCC 204508 / S288c) (Baker's yeast).